Consider the following 14507-residue polypeptide: Mucin-16 (14507 aa).

Positions methionine 1 to leucine 17 are enriched in low complexity. The segment at methionine 1 to glycine 138 is disordered. Residues methionine 1–proline 14451 are Extracellular-facing. 2 stretches are compositionally biased toward polar residues: residues threonine 35 to glycine 46 and proline 56 to glycine 138. A glycan (N-linked (GlcNAc...) asparagine) is linked at asparagine 139. Disordered regions lie at residues glutamate 160–tryptophan 180, aspartate 198–serine 229, phenylalanine 265–serine 287, leucine 396–valine 554, valine 655–methionine 674, serine 695–lysine 719, and threonine 740–leucine 888. Residues threonine 166–threonine 178 show a composition bias toward low complexity. The span at proline 212 to serine 229 shows a compositional bias: polar residues. 2 stretches are compositionally biased toward low complexity: residues serine 276–serine 287 and leucine 396–leucine 413. Composition is skewed to polar residues over residues valine 414–serine 423, glycine 431–glutamate 441, and glycine 460–histidine 478. An N-linked (GlcNAc...) asparagine glycan is attached at asparagine 434. Low complexity-rich tracts occupy residues threonine 485 to threonine 497 and alanine 508 to alanine 525. Polar residues predominate over residues glutamine 526–methionine 543. Composition is skewed to polar residues over residues leucine 696–proline 706, threonine 740–threonine 780, asparagine 787–serine 796, and serine 805–isoleucine 821. N-linked (GlcNAc...) asparagine glycosylation occurs at asparagine 787. Residues proline 823 to valine 846 are compositionally biased toward low complexity. 2 stretches are compositionally biased toward polar residues: residues lysine 847–phenylalanine 860 and threonine 869–leucine 888. N-linked (GlcNAc...) asparagine glycans are attached at residues asparagine 930 and asparagine 957. 4 stretches are compositionally biased toward polar residues: residues serine 949–glutamate 969, glycine 1092–glutamine 1101, glycine 1124–histidine 1137, and serine 1301–serine 1317. Disordered regions lie at residues serine 949–alanine 981, valine 1082–glutamine 1101, proline 1121–threonine 1149, serine 1301–serine 1378, leucine 1593–serine 1641, and leucine 1704–threonine 1757. Positions threonine 1318–threonine 1328 are enriched in low complexity. Composition is skewed to polar residues over residues serine 1334–leucine 1347, proline 1368–serine 1378, glutamine 1596–threonine 1613, glycine 1621–asparagine 1633, and leucine 1704–methionine 1745. An N-linked (GlcNAc...) asparagine glycan is attached at asparagine 1375. Residue asparagine 1633 is glycosylated (N-linked (GlcNAc...) asparagine). The span at serine 1746–threonine 1757 shows a compositional bias: low complexity. Residues asparagine 1840, asparagine 1877, and asparagine 1890 are each glycosylated (N-linked (GlcNAc...) asparagine). Positions aspartate 1846 to isoleucine 1908 are enriched in polar residues. Disordered stretches follow at residues aspartate 1846 to arginine 1930, valine 2010 to alanine 2033, tryptophan 2064 to isoleucine 2140, and arginine 2153 to threonine 2177. 2 stretches are compositionally biased toward low complexity: residues serine 2019–alanine 2033 and tryptophan 2064–serine 2085. Positions histidine 2111–serine 2132 are enriched in polar residues. Residues asparagine 2345 and asparagine 2375 are each glycosylated (N-linked (GlcNAc...) asparagine). Disordered stretches follow at residues proline 2393–isoleucine 2455 and serine 2566–alanine 2591. Low complexity-rich tracts occupy residues threonine 2417 to serine 2429 and serine 2566 to serine 2583. N-linked (GlcNAc...) asparagine glycosylation occurs at asparagine 2737. Disordered regions lie at residues threonine 2789–asparagine 2822, threonine 2838–isoleucine 2885, aspartate 2901–serine 3006, threonine 3019–lysine 3052, threonine 3083–isoleucine 3148, serine 3172–threonine 3235, alanine 3251–asparagine 3276, glycine 3299–threonine 3392, threonine 3415–serine 3436, and valine 3462–proline 3491. Polar residues predominate over residues serine 2803–leucine 2819. Residues serine 2864–serine 2875 show a composition bias toward low complexity. 2 stretches are compositionally biased toward polar residues: residues leucine 2876 to isoleucine 2885 and aspartate 2901 to proline 2918. Residues aspartate 2919–lysine 2931 are compositionally biased toward low complexity. Positions methionine 2942–proline 2968 are enriched in polar residues. Low complexity predominate over residues threonine 3019 to serine 3035. Residues serine 3041 to lysine 3052 show a composition bias toward polar residues. Asparagine 3085 is a glycosylation site (N-linked (GlcNAc...) asparagine). The span at threonine 3107–threonine 3116 shows a compositional bias: low complexity. Composition is skewed to polar residues over residues proline 3117 to glutamate 3132 and serine 3172 to tryptophan 3181. Residue asparagine 3178 is glycosylated (N-linked (GlcNAc...) asparagine). Over residues threonine 3188–proline 3200 the composition is skewed to low complexity. 2 stretches are compositionally biased toward polar residues: residues glutamate 3201 to proline 3214 and alanine 3251 to histidine 3261. The span at proline 3263–threonine 3274 shows a compositional bias: low complexity. 2 stretches are compositionally biased toward polar residues: residues glycine 3299–methionine 3342 and valine 3360–threonine 3383. 2 stretches are compositionally biased toward low complexity: residues serine 3424–serine 3436 and proline 3477–proline 3491. Asparagine 3501 is a glycosylation site (N-linked (GlcNAc...) asparagine). Residues isoleucine 3538–proline 3555 are compositionally biased toward low complexity. Disordered regions lie at residues isoleucine 3538–alanine 3588, threonine 3644–threonine 3672, arginine 3794–proline 3829, alanine 3843–alanine 3879, leucine 3914–valine 3982, methionine 4024–arginine 4056, alanine 4094–threonine 4121, and phenylalanine 4138–histidine 4166. Polar residues-rich tracts occupy residues glutamine 3812–histidine 3824 and alanine 3848–serine 3868. The span at serine 3916–serine 3927 shows a compositional bias: low complexity. Over residues proline 3946 to valine 3982 the composition is skewed to polar residues. A compositionally biased stretch (low complexity) spans threonine 4026 to threonine 4041. The segment covering methionine 4095 to threonine 4121 has biased composition (polar residues). The span at serine 4152–proline 4164 shows a compositional bias: low complexity. Residues asparagine 4220, asparagine 4498, asparagine 4606, asparagine 4613, and asparagine 4624 are each glycosylated (N-linked (GlcNAc...) asparagine). 3 disordered regions span residues valine 4728–glutamine 4748, histidine 4845–serine 4961, and valine 5026–serine 5066. The span at lysine 4856–isoleucine 4876 shows a compositional bias: polar residues. Asparagine 4861 carries an N-linked (GlcNAc...) asparagine glycan. 2 stretches are compositionally biased toward low complexity: residues proline 4877–threonine 4914 and threonine 4924–serine 4939. 2 stretches are compositionally biased toward polar residues: residues aspartate 4944 to serine 4961 and valine 5026 to threonine 5037. Positions serine 5038–proline 5047 are enriched in low complexity. A compositionally biased stretch (polar residues) spans alanine 5048–leucine 5059. 3 N-linked (GlcNAc...) asparagine glycosylation sites follow: asparagine 5096, asparagine 5131, and asparagine 5228. 3 disordered regions span residues valine 5128–lysine 5149, glutamate 5221–threonine 5249, and threonine 5271–glutamine 5303. Residues glutamate 5221 to serine 5234 are compositionally biased toward polar residues. Residues serine 5280–serine 5293 are compositionally biased toward low complexity. Residues glutamine 5294 to glutamine 5303 show a composition bias toward polar residues. N-linked (GlcNAc...) asparagine glycosylation is present at asparagine 5320. 7 disordered regions span residues proline 5328–valine 5365, glycine 5381–histidine 5400, asparagine 5426–alanine 5507, alanine 5519–threonine 5538, proline 5624–proline 5654, leucine 5675–glutamate 5696, and isoleucine 5727–serine 5747. Low complexity-rich tracts occupy residues serine 5333–valine 5365 and glycine 5381–proline 5393. The N-linked (GlcNAc...) asparagine glycan is linked to asparagine 5394. Polar residues-rich tracts occupy residues asparagine 5426–leucine 5441 and serine 5447–leucine 5485. N-linked (GlcNAc...) asparagine glycosylation is present at asparagine 5470. 4 stretches are compositionally biased toward low complexity: residues serine 5495–threonine 5504, serine 5520–serine 5532, serine 5633–proline 5654, and leucine 5675–proline 5688. Asparagine 5689 carries an N-linked (GlcNAc...) asparagine glycan. The segment covering isoleucine 5727 to proline 5737 has biased composition (polar residues). Asparagine 5863 carries an N-linked (GlcNAc...) asparagine glycan. Disordered regions lie at residues serine 5882 to valine 5931 and serine 6054 to leucine 6078. Residues threonine 5903–glutamine 5916 show a composition bias toward polar residues. A compositionally biased stretch (low complexity) spans serine 5917–serine 5928. Polar residues predominate over residues serine 6054–threonine 6063. The N-linked (GlcNAc...) asparagine glycan is linked to asparagine 6088. Disordered stretches follow at residues proline 6122–isoleucine 6149, asparagine 6219–valine 6251, serine 6399–threonine 6425, threonine 6438–threonine 6459, isoleucine 6497–proline 6545, and threonine 6682–serine 6714. Composition is skewed to low complexity over residues serine 6134–isoleucine 6149, proline 6226–valine 6251, and serine 6399–serine 6410. 2 stretches are compositionally biased toward polar residues: residues isoleucine 6411 to threonine 6425 and isoleucine 6445 to threonine 6459. Residues threonine 6500 to proline 6523 are compositionally biased toward low complexity. Composition is skewed to polar residues over residues leucine 6530–proline 6545 and threonine 6683–threonine 6699. Asparagine 6732 carries N-linked (GlcNAc...) asparagine glycosylation. 3 disordered regions span residues serine 6800–lysine 6822, threonine 6845–histidine 6865, and threonine 6886–threonine 6939. A compositionally biased stretch (low complexity) spans threonine 6848–serine 6864. Asparagine 6859 carries N-linked (GlcNAc...) asparagine glycosylation. The segment covering threonine 6886 to leucine 6905 has biased composition (polar residues). Residues threonine 6919 to threonine 6938 are compositionally biased toward low complexity. N-linked (GlcNAc...) asparagine glycosylation occurs at asparagine 6961. Disordered stretches follow at residues alanine 6981–valine 7004, methionine 7028–serine 7107, threonine 7143–alanine 7208, serine 7279–glutamate 7302, glutamate 7320–threonine 7345, glutamine 7360–threonine 7427, leucine 7437–valine 7456, glutamate 7463–lysine 7503, serine 7527–threonine 7553, threonine 7577–glutamine 7597, alanine 7726–serine 7782, leucine 7825–serine 7849, histidine 7908–threonine 7927, and proline 7970–proline 8000. Residues methionine 7028–glycine 7038 are compositionally biased toward polar residues. The span at serine 7039 to glutamine 7055 shows a compositional bias: low complexity. Positions lysine 7057–methionine 7075 are enriched in polar residues. A compositionally biased stretch (low complexity) spans serine 7086–threonine 7105. Residues glycine 7166–leucine 7200 show a composition bias toward polar residues. A compositionally biased stretch (low complexity) spans serine 7279 to threonine 7298. Polar residues-rich tracts occupy residues serine 7322–threonine 7345, glutamine 7360–valine 7371, and serine 7390–isoleucine 7402. Low complexity-rich tracts occupy residues serine 7403–threonine 7427 and alanine 7439–serine 7455. Residues phenylalanine 7474–threonine 7484 show a composition bias toward polar residues. Residues serine 7485–serine 7494 are compositionally biased toward low complexity. Positions glycine 7733–threonine 7749 are enriched in low complexity. The segment covering serine 7750–alanine 7765 has biased composition (basic and acidic residues). The segment covering proline 7768 to serine 7782 has biased composition (polar residues). 3 stretches are compositionally biased toward low complexity: residues glutamate 7835 to threonine 7846, threonine 7915 to threonine 7927, and serine 7973 to proline 8000. N-linked (GlcNAc...) asparagine glycans are attached at residues asparagine 8029 and asparagine 8055. Disordered stretches follow at residues glutamate 8042–serine 8078, isoleucine 8111–leucine 8134, glycine 8312–glutamate 8331, threonine 8342–glycine 8389, threonine 8411–aspartate 8472, methionine 8604–alanine 8624, serine 8674–serine 8741, and threonine 8775–proline 8880. The segment covering proline 8052–serine 8078 has biased composition (polar residues). The segment covering threonine 8319–threonine 8328 has biased composition (low complexity). N-linked (GlcNAc...) asparagine glycosylation occurs at asparagine 8324. The span at methionine 8345–glycine 8389 shows a compositional bias: polar residues. Residues threonine 8607–alanine 8624 are compositionally biased toward low complexity. N-linked (GlcNAc...) asparagine glycosylation is found at asparagine 8618 and asparagine 8684. 2 stretches are compositionally biased toward polar residues: residues serine 8674–valine 8740 and glycine 8781–alanine 8810. The span at threonine 8850–proline 8880 shows a compositional bias: low complexity. An N-linked (GlcNAc...) asparagine glycan is attached at asparagine 8913. 2 disordered regions span residues glutamate 8995–lysine 9018 and serine 9147–histidine 9168. Asparagine 9202 carries N-linked (GlcNAc...) asparagine glycosylation. Low complexity predominate over residues serine 9294–threonine 9307. The segment at serine 9294–proline 9460 is disordered. Composition is skewed to polar residues over residues valine 9308–leucine 9357 and serine 9374–methionine 9412. The span at serine 9431–proline 9460 shows a compositional bias: low complexity. N-linked (GlcNAc...) asparagine glycosylation occurs at asparagine 9493. Disordered regions lie at residues alanine 9611 to threonine 9635, serine 9726 to serine 9753, valine 9771 to valine 9791, and threonine 9869 to serine 9890. Residues methionine 9621–threonine 9635 are compositionally biased toward polar residues. Low complexity-rich tracts occupy residues threonine 9774–serine 9790 and glutamate 9881–serine 9890. Residue asparagine 9785 is glycosylated (N-linked (GlcNAc...) asparagine). Residues asparagine 10075 and asparagine 10173 are each glycosylated (N-linked (GlcNAc...) asparagine). Disordered stretches follow at residues serine 10175–serine 10218 and threonine 10445–threonine 10469. Residues threonine 10178–threonine 10193 show a composition bias toward low complexity. Over residues histidine 10194 to proline 10212 the composition is skewed to polar residues. An N-linked (GlcNAc...) asparagine glycan is attached at asparagine 10510. Residues serine 10544–serine 10573 are compositionally biased toward polar residues. 2 disordered regions span residues serine 10544 to serine 10590 and glutamate 10689 to glutamate 10719. Asparagine 10700 is a glycosylation site (N-linked (GlcNAc...) asparagine). Residues alanine 10708–glutamate 10719 show a composition bias toward polar residues. Asparagine 10749 carries an N-linked (GlcNAc...) asparagine glycan. Over residues threonine 10849–glutamate 10860 the composition is skewed to polar residues. Disordered stretches follow at residues threonine 10849–threonine 10872, leucine 10898–valine 10926, and leucine 11003–proline 11036. Positions serine 10861–threonine 10872 are enriched in low complexity. Low complexity predominate over residues leucine 11003–serine 11018. N-linked (GlcNAc...) asparagine glycosylation occurs at asparagine 11053. The segment at serine 11072–proline 11092 is disordered. N-linked (GlcNAc...) asparagine glycosylation is found at asparagine 11224 and asparagine 11263. Composition is skewed to polar residues over residues histidine 11269 to phenylalanine 11284 and serine 11358 to threonine 11381. 6 disordered regions span residues histidine 11269–alanine 11301, serine 11358–valine 11400, lysine 11508–threonine 11537, glutamate 11583–arginine 11724, serine 11836–methionine 11861, and glutamine 11913–threonine 11937. Residue asparagine 11367 is glycosylated (N-linked (GlcNAc...) asparagine). 3 stretches are compositionally biased toward polar residues: residues glutamate 11583–asparagine 11594, valine 11631–proline 11651, and threonine 11658–phenylalanine 11672. Asparagine 11594 carries an N-linked (GlcNAc...) asparagine glycan. Low complexity predominate over residues proline 11700–proline 11717. 2 stretches are compositionally biased toward polar residues: residues proline 11849–methionine 11861 and glutamine 11913–serine 11928. Repeat copies occupy residues alanine 12067–threonine 12223, threonine 12224–methionine 12381, alanine 12382–alanine 12537, threonine 12538–threonine 12692, threonine 12693–threonine 12848, serine 12849–threonine 13004, threonine 13005–threonine 13160, threonine 13161–threonine 13316, alanine 13317–methionine 13472, threonine 13473–serine 13628, alanine 13629–serine 13784, and alanine 13785–alanine 13939. Residues alanine 12067–alanine 13939 are 12 X approximate tandem repeats. The SEA 1 domain occupies phenylalanine 12072–histidine 12193. N-linked (GlcNAc...) asparagine glycans are attached at residues asparagine 12079, asparagine 12100, and asparagine 12116. A disulfide bridge links cysteine 12126 with cysteine 12146. An N-linked (GlcNAc...) asparagine glycan is attached at asparagine 12168. The tract at residues serine 12196–glycine 12226 is disordered. The region spanning leucine 12228–histidine 12349 is the SEA 2 domain. Residues asparagine 12235 and asparagine 12272 are each glycosylated (N-linked (GlcNAc...) asparagine). Cysteines 12282 and 12302 form a disulfide. A disordered region spans residues valine 12353–serine 12376. 3 consecutive SEA domains span residues leucine 12386–histidine 12507, leucine 12542–histidine 12663, and leucine 12697–histidine 12818. N-linked (GlcNAc...) asparagine glycosylation is found at asparagine 12393, asparagine 12414, and asparagine 12430. Residues cysteine 12440 and cysteine 12460 are joined by a disulfide bond. N-linked (GlcNAc...) asparagine glycans are attached at residues asparagine 12549, asparagine 12570, and asparagine 12586. A disulfide bridge links cysteine 12596 with cysteine 12616. N-linked (GlcNAc...) asparagine glycosylation is found at asparagine 12704, asparagine 12725, and asparagine 12741. The cysteines at positions 12751 and 12771 are disulfide-linked. Over residues glutamine 12819–aspartate 12834 the composition is skewed to polar residues. The segment at glutamine 12819 to serine 12849 is disordered. N-linked (GlcNAc...) asparagine glycosylation is present at asparagine 12824. The span at leucine 12835–serine 12849 shows a compositional bias: low complexity. The SEA 6 domain maps to leucine 12853 to histidine 12974. N-linked (GlcNAc...) asparagine glycosylation is found at asparagine 12860, asparagine 12881, and asparagine 12897. A disulfide bond links cysteine 12907 and cysteine 12927. Positions valine 12978–aspartate 12990 are enriched in polar residues. Residues valine 12978 to proline 13003 are disordered. The segment covering leucine 12991–proline 13003 has biased composition (low complexity). SEA domains lie at leucine 13009 to histidine 13130 and leucine 13165 to glutamine 13286. 3 N-linked (GlcNAc...) asparagine glycosylation sites follow: asparagine 13016, asparagine 13037, and asparagine 13053. Cysteine 13063 and cysteine 13083 form a disulfide bridge. N-linked (GlcNAc...) asparagine glycans are attached at residues asparagine 13172 and asparagine 13193. Cysteine 13219 and cysteine 13239 are joined by a disulfide. A compositionally biased stretch (polar residues) spans proline 13291–proline 13313. The segment at proline 13291–alanine 13317 is disordered. SEA domains follow at residues valine 13321–histidine 13442 and leucine 13477–glutamine 13598. Residues asparagine 13328, asparagine 13349, and asparagine 13365 are each glycosylated (N-linked (GlcNAc...) asparagine). Cysteine 13375 and cysteine 13395 form a disulfide bridge. N-linked (GlcNAc...) asparagine glycans are attached at residues asparagine 13484, asparagine 13505, and asparagine 13521. Cysteines 13531 and 13551 form a disulfide. Polar residues predominate over residues proline 13603 to proline 13621. A disordered region spans residues proline 13603–proline 13625. 4 consecutive SEA domains span residues leucine 13633 to histidine 13754, leucine 13789 to histidine 13909, serine 13922 to glutamate 14043, and histidine 14073 to proline 14193. Asparagine 13640 and asparagine 13661 each carry an N-linked (GlcNAc...) asparagine glycan. An intrachain disulfide couples cysteine 13687 to cysteine 13707. N-linked (GlcNAc...) asparagine glycans are attached at residues asparagine 13733, asparagine 13744, asparagine 13796, asparagine 13816, asparagine 13832, asparagine 13929, and asparagine 13950. A disulfide bridge links cysteine 13976 with cysteine 13996. N-linked (GlcNAc...) asparagine glycosylation is found at asparagine 14080 and asparagine 14100. Cysteine 14126 and cysteine 14146 form a disulfide bridge. N-linked (GlcNAc...) asparagine glycans are attached at residues asparagine 14195, asparagine 14212, asparagine 14254, asparagine 14287, asparagine 14326, and asparagine 14363. 2 SEA domains span residues isoleucine 14198 to serine 14309 and serine 14319 to proline 14438. Cysteine 14373 and cysteine 14393 are joined by a disulfide. N-linked (GlcNAc...) asparagine glycans are attached at residues asparagine 14417 and asparagine 14423. A helical transmembrane segment spans residues phenylalanine 14452–cysteine 14472. The Cytoplasmic portion of the chain corresponds to glycine 14473–glutamine 14507.

As to quaternary structure, binds to MSLN. Binding to MSLN mediates heterotypic cell adhesion. This may contribute to the metastasis of ovarian cancer to the peritoneum by initiating cell attachment to the mesothelial epithelium via binding to MSLN. Heavily O-glycosylated; expresses both type 1 and type 2 core glycans. Post-translationally, heavily N-glycosylated; expresses primarily high mannose and complex bisecting type N-linked glycans. In terms of processing, may be phosphorylated. Phosphorylation of the intracellular C-terminal domain may induce proteolytic cleavage and the liberation of the extracellular domain into the extracellular space. May contain numerous disulfide bridges. Association of several molecules of the secreted form may occur through interchain disulfide bridges providing an extraordinarily large gel-like matrix in the extracellular space or in the lumen of secretory ducts. In terms of tissue distribution, expressed in corneal and conjunctival epithelia (at protein level). Overexpressed in ovarian carcinomas and ovarian low malignant potential (LMP) tumors as compared to the expression in normal ovarian tissue and ovarian adenomas.

Its subcellular location is the cell membrane. It localises to the secreted. The protein localises to the extracellular space. Thought to provide a protective, lubricating barrier against particles and infectious agents at mucosal surfaces. This chain is Mucin-16, found in Homo sapiens (Human).